The sequence spans 131 residues: Ribosome-binding factor A (131 aa).

The protein belongs to the RbfA family. As to quaternary structure, monomer. Binds 30S ribosomal subunits, but not 50S ribosomal subunits or 70S ribosomes.

The protein localises to the cytoplasm. Its function is as follows. One of several proteins that assist in the late maturation steps of the functional core of the 30S ribosomal subunit. Associates with free 30S ribosomal subunits (but not with 30S subunits that are part of 70S ribosomes or polysomes). Required for efficient processing of 16S rRNA. May interact with the 5'-terminal helix region of 16S rRNA. This is Ribosome-binding factor A from Ruegeria sp. (strain TM1040) (Silicibacter sp.).